A 705-amino-acid polypeptide reads, in one-letter code: Protein arginine N-methyltransferase 7 (705 aa).

SAM-dependent MTase PRMT-type domains are found at residues 29-372 and 381-705; these read QNSW…YSLW and TKSV…QKKL.

It belongs to the class I-like SAM-binding methyltransferase superfamily. Protein arginine N-methyltransferase family. PRMT7 subfamily.

Essential arginine methyltransferase that can both catalyze the formation of omega-N monomethylarginine (MMA) and symmetrical dimethylarginine (sDMA). Specifically mediates the symmetrical dimethylation of arginine residues in the small nuclear ribonucleoproteins SmD1 and SmD3. The polypeptide is Protein arginine N-methyltransferase 7 (Art7) (Drosophila simulans (Fruit fly)).